The chain runs to 148 residues: Large ribosomal subunit protein bL19 (148 aa).

Belongs to the bacterial ribosomal protein bL19 family.

This protein is located at the 30S-50S ribosomal subunit interface and may play a role in the structure and function of the aminoacyl-tRNA binding site. The polypeptide is Large ribosomal subunit protein bL19 (Beijerinckia indica subsp. indica (strain ATCC 9039 / DSM 1715 / NCIMB 8712)).